The primary structure comprises 360 residues: MTTTLQRRESANLWERFCNWVTSTDNRLYVGWFGVIMIPTLLAATICFVIAFIAAPPVDIDGIREPVSGSLLYGNNIITGAVVPSSNAIGLHFYPIWEAASLDEWLYNGGPYQLIIFHFLLGASCYMGRQWELSYRLGMRPWICVAYSAPLASAFAVFLIYPIGQGSFSDGMPLGISGTFNFMIVFQAEHNILMHPFHQLGVAGVFGGALFCAMHGSLVTSSLIRETTETESANYGYKFGQEEETYNIVAAHGYFGRLIFQYASFNNSRSLHFFLAAWRVVGVWFAALGISTMAFNLNGFNFNHSVIDAKGNVINTWADIINRANLGMEVMHERNAHNFPLDLASAESAPVAMIAPSING.

Residues M1 to L28 lie on the Cytoplasmic side of the membrane. The chain crosses the membrane as a helical span at residues Y29–I46. Residues C47–F117 are Lumenal-facing. Position 118 (H118) interacts with chlorophyll a. Residues H118–L133 form a helical membrane-spanning segment. Pheophytin a is bound by residues Y126 and Q130. The Cytoplasmic segment spans residues S134 to P141. A helical membrane pass occupies residues W142–A156. Position 147 (Y147) interacts with pheophytin a. The Lumenal segment spans residues V157 to P196. [CaMn4O5] cluster contacts are provided by D170 and E189. A helical membrane pass occupies residues F197 to L218. Residue H198 participates in chlorophyll a binding. M214 is a binding site for pheophytin a. A quinone is bound by residues H215 and S264 to F265. H215 lines the Fe cation pocket. Residues V219–F273 are Cytoplasmic-facing. Position 272 (H272) interacts with Fe cation. Residues F274 to L288 form a helical membrane-spanning segment. Topologically, residues G289–G360 are lumenal. [CaMn4O5] cluster contacts are provided by H332, E333, D342, and A344. The propeptide occupies S345–G360.

Belongs to the reaction center PufL/M/PsbA/D family. In terms of assembly, PSII is composed of 1 copy each of membrane proteins PsbA, PsbB, PsbC, PsbD, PsbE, PsbF, PsbH, PsbI, PsbJ, PsbK, PsbL, PsbM, PsbT, PsbX, PsbY, PsbZ, Psb30/Ycf12, peripheral proteins PsbO, CyanoQ (PsbQ), PsbU, PsbV and a large number of cofactors. It forms dimeric complexes. Requires The D1/D2 heterodimer binds P680, chlorophylls that are the primary electron donor of PSII, and subsequent electron acceptors. It shares a non-heme iron and each subunit binds pheophytin, quinone, additional chlorophylls, carotenoids and lipids. D1 provides most of the ligands for the Mn4-Ca-O5 cluster of the oxygen-evolving complex (OEC). There is also a Cl(-1) ion associated with D1 and D2, which is required for oxygen evolution. The PSII complex binds additional chlorophylls, carotenoids and specific lipids. as cofactor. C-terminally processed by CtpA; processing is essential to allow assembly of the oxygen-evolving complex and thus photosynthetic growth. In terms of processing, tyr-161 forms a radical intermediate that is referred to as redox-active TyrZ, YZ or Y-Z.

Its subcellular location is the cellular thylakoid membrane. It carries out the reaction 2 a plastoquinone + 4 hnu + 2 H2O = 2 a plastoquinol + O2. Photosystem II (PSII) is a light-driven water:plastoquinone oxidoreductase that uses light energy to abstract electrons from H(2)O, generating O(2) and a proton gradient subsequently used for ATP formation. It consists of a core antenna complex that captures photons, and an electron transfer chain that converts photonic excitation into a charge separation. The D1/D2 (PsbA/PsbD) reaction center heterodimer binds P680, the primary electron donor of PSII as well as several subsequent electron acceptors. The sequence is that of Photosystem II protein D1 from Thermostichus vulcanus (Synechococcus vulcanus).